Consider the following 118-residue polypeptide: Succinate dehydrogenase assembly factor 4, mitochondrial (118 aa).

The N-terminal 30 residues, 1-30 (MQSVTRQTARVLPQMGKQVSYLSTSGAWRA), are a transit peptide targeting the mitochondrion. Residues 65–118 (GKLDEFSRHPYQEKEPLKPWPNQTNPYTGEIGGPAGPEPTRYGDWERKGRVSDF) are disordered. 2 stretches are compositionally biased toward basic and acidic residues: residues 66-81 (KLDEFSRHPYQEKEPL) and 105-118 (RYGDWERKGRVSDF).

This sequence belongs to the SDHAF4 family. In terms of assembly, interacts with SdhA in its FAD-bound form.

The protein resides in the mitochondrion matrix. Its function is as follows. Plays an essential role in the assembly of succinate dehydrogenase (SDH), an enzyme complex (also referred to as respiratory complex II) that is a component of both the tricarboxylic acid (TCA) cycle and the mitochondrial electron transport chain, and which couples the oxidation of succinate to fumarate with the reduction of ubiquinone (coenzyme Q) to ubiquinol. Binds to the flavoprotein subunit SdhA in its FAD-bound form, blocking the generation of excess reactive oxygen species (ROS) and facilitating its assembly with the iron-sulfur protein subunit SdhB into the SDH catalytic dimer. In Drosophila melanogaster (Fruit fly), this protein is Succinate dehydrogenase assembly factor 4, mitochondrial.